Consider the following 320-residue polypeptide: MQYAKISGTGSYLPANRVSNDDLAQKVDTSDEWITARTGIKFRHIAAENEKTSDLAAEAARRALADAKLNINDIDLIIVATATPDMQFPSTATIVQQKLGITNGCPAFDVQAVCAGFMYALTTANAYIKSGMAKNALVIGAETFSRIVDWNDRTTCVLFGDGAGAVVLSASDKPGIIHSKLKADGNYLKLLNVPGQIACGKVSGSPYISMDGPGVFKFAVKMLSKIADDVIEEAGYTAEQIDWIVPHQANRRIIESTAKHLGLSMDKVVLTVQDHGNTSAASIPLALDAGIRSGQIKRGQNLLLEGIGGGFAWGAVLLQY.

Residues Cys114 and His247 contribute to the active site. An ACP-binding region spans residues Gln248 to Arg252. Asn277 is an active-site residue.

The protein belongs to the thiolase-like superfamily. FabH family. In terms of assembly, homodimer.

The protein localises to the cytoplasm. It carries out the reaction malonyl-[ACP] + acetyl-CoA + H(+) = 3-oxobutanoyl-[ACP] + CO2 + CoA. It functions in the pathway lipid metabolism; fatty acid biosynthesis. Its function is as follows. Catalyzes the condensation reaction of fatty acid synthesis by the addition to an acyl acceptor of two carbons from malonyl-ACP. Catalyzes the first condensation reaction which initiates fatty acid synthesis and may therefore play a role in governing the total rate of fatty acid production. Possesses both acetoacetyl-ACP synthase and acetyl transacylase activities. Its substrate specificity determines the biosynthesis of branched-chain and/or straight-chain of fatty acids. This Neisseria gonorrhoeae (strain ATCC 700825 / FA 1090) protein is Beta-ketoacyl-[acyl-carrier-protein] synthase III.